We begin with the raw amino-acid sequence, 287 residues long: ATP synthase gamma chain (287 aa).

This sequence belongs to the ATPase gamma chain family. F-type ATPases have 2 components, CF(1) - the catalytic core - and CF(0) - the membrane proton channel. CF(1) has five subunits: alpha(3), beta(3), gamma(1), delta(1), epsilon(1). CF(0) has three main subunits: a, b and c.

The protein resides in the cell inner membrane. Produces ATP from ADP in the presence of a proton gradient across the membrane. The gamma chain is believed to be important in regulating ATPase activity and the flow of protons through the CF(0) complex. This chain is ATP synthase gamma chain, found in Pectobacterium carotovorum subsp. carotovorum (strain PC1).